We begin with the raw amino-acid sequence, 58 residues long: Gigasin-4 (58 aa).

As to expression, component of the organic matrix of calcified shell layers.

In Magallana gigas (Pacific oyster), this protein is Gigasin-4.